Consider the following 288-residue polypeptide: Phosphatidylglycerol--prolipoprotein diacylglyceryl transferase (288 aa).

Helical transmembrane passes span 18-38 (WSLR…LACL), 68-88 (FFIY…VIFY), 107-127 (GLSS…FSWI), and 135-155 (LTFL…AFFI). R156 contributes to the a 1,2-diacyl-sn-glycero-3-phospho-(1'-sn-glycerol) binding site. 3 helical membrane passes run 193-213 (VQLY…FLSY), 222-242 (GYVT…AEYV), and 256-276 (LTIG…LLII).

This sequence belongs to the Lgt family.

It is found in the cell inner membrane. The catalysed reaction is L-cysteinyl-[prolipoprotein] + a 1,2-diacyl-sn-glycero-3-phospho-(1'-sn-glycerol) = an S-1,2-diacyl-sn-glyceryl-L-cysteinyl-[prolipoprotein] + sn-glycerol 1-phosphate + H(+). The protein operates within protein modification; lipoprotein biosynthesis (diacylglyceryl transfer). Catalyzes the transfer of the diacylglyceryl group from phosphatidylglycerol to the sulfhydryl group of the N-terminal cysteine of a prolipoprotein, the first step in the formation of mature lipoproteins. The polypeptide is Phosphatidylglycerol--prolipoprotein diacylglyceryl transferase (Chlamydia pneumoniae (Chlamydophila pneumoniae)).